The sequence spans 347 residues: Heat-inducible transcription repressor HrcA (347 aa).

The protein belongs to the HrcA family.

In terms of biological role, negative regulator of class I heat shock genes (grpE-dnaK-dnaJ and groELS operons). Prevents heat-shock induction of these operons. The chain is Heat-inducible transcription repressor HrcA from Lactiplantibacillus plantarum (strain ATCC BAA-793 / NCIMB 8826 / WCFS1) (Lactobacillus plantarum).